A 583-amino-acid chain; its full sequence is Probable phosphoglucomutase, cytoplasmic 1 (583 aa).

Residues Arg24 and Ser123 each contribute to the alpha-D-glucose 1,6-bisphosphate site. The Phosphoserine intermediate role is filled by Ser123. Mg(2+) contacts are provided by Ser123, Asp299, Asp301, and Asp303. Phosphoserine is present on Ser123. Positions 303, 304, 367, 386, 388, and 399 each coordinate alpha-D-glucose 1,6-bisphosphate.

Belongs to the phosphohexose mutase family. As to quaternary structure, monomer. Requires Mg(2+) as cofactor.

It localises to the cytoplasm. The catalysed reaction is alpha-D-glucose 1-phosphate = alpha-D-glucose 6-phosphate. It carries out the reaction O-phospho-L-seryl-[protein] + alpha-D-glucose 1-phosphate = alpha-D-glucose 1,6-bisphosphate + L-seryl-[protein]. It catalyses the reaction alpha-D-glucose 1,6-bisphosphate + L-seryl-[protein] = O-phospho-L-seryl-[protein] + alpha-D-glucose 6-phosphate. In terms of biological role, catalyzes the reversible isomerization of alpha-D-glucose 1-phosphate to alpha-D-glucose 6-phosphate. The mechanism proceeds via the intermediate compound alpha-D-glucose 1,6-bisphosphate. This enzyme participates in both the breakdown and synthesis of glucose. This chain is Probable phosphoglucomutase, cytoplasmic 1, found in Arabidopsis thaliana (Mouse-ear cress).